The following is a 585-amino-acid chain: Probable inactive serine/threonine-protein kinase slob1 (585 aa).

The FYVE-type zinc-finger motif lies at 21–82 (DQSSLECNDC…LCRSCNNSFE (62 aa)). C27, C30, C43, C46, C51, C54, C74, and C77 together coordinate Zn(2+). The region spanning 108 to 478 (SKPLQDIGHT…STSLLNNSFN (371 aa)) is the Protein kinase domain. Composition is skewed to low complexity over residues 426 to 456 (ISKLSSSSSNNNSNNNNNNNNNSNTFNNISS) and 466 to 503 (LPSSTSLLNNSFNLSNNNNPSSPSTSTISPNSSLISSP). Residues 426 to 585 (ISKLSSSSSN…SLKPSSTKKK (160 aa)) are disordered. Over residues 513–532 (TPPPPPPPPKSAPPPPPPPS) the composition is skewed to pro residues. A compositionally biased stretch (low complexity) spans 533 to 542 (SSKLPPSSSS). Residues 542–562 (SRNSLLESIRNADNAKKLKKT) enclose the WH2 domain.

Belongs to the protein kinase superfamily. Ser/Thr protein kinase family.

This Dictyostelium discoideum (Social amoeba) protein is Probable inactive serine/threonine-protein kinase slob1 (slob1).